Consider the following 651-residue polypeptide: Acetyl-coenzyme A synthetase (651 aa).

CoA contacts are provided by residues 189–192 (RGGK), T311, and N335. ATP contacts are provided by residues 387 to 389 (GEP), 411 to 416 (DTWWQT), D500, and R515. S523 is a binding site for CoA. Position 526 (R526) interacts with ATP. The Mg(2+) site is built by V537, H539, and V542. Position 584 (R584) interacts with CoA. N6-acetyllysine is present on K609.

Belongs to the ATP-dependent AMP-binding enzyme family. Mg(2+) serves as cofactor. Acetylated. Deacetylation by the SIR2-homolog deacetylase activates the enzyme.

The catalysed reaction is acetate + ATP + CoA = acetyl-CoA + AMP + diphosphate. Catalyzes the conversion of acetate into acetyl-CoA (AcCoA), an essential intermediate at the junction of anabolic and catabolic pathways. AcsA undergoes a two-step reaction. In the first half reaction, AcsA combines acetate with ATP to form acetyl-adenylate (AcAMP) intermediate. In the second half reaction, it can then transfer the acetyl group from AcAMP to the sulfhydryl group of CoA, forming the product AcCoA. The sequence is that of Acetyl-coenzyme A synthetase from Allorhizobium ampelinum (strain ATCC BAA-846 / DSM 112012 / S4) (Agrobacterium vitis (strain S4)).